Here is a 258-residue protein sequence, read N- to C-terminus: Imidazole glycerol phosphate synthase subunit HisF (258 aa).

Active-site residues include Asp11 and Asp130.

This sequence belongs to the HisA/HisF family. Heterodimer of HisH and HisF.

Its subcellular location is the cytoplasm. The catalysed reaction is 5-[(5-phospho-1-deoxy-D-ribulos-1-ylimino)methylamino]-1-(5-phospho-beta-D-ribosyl)imidazole-4-carboxamide + L-glutamine = D-erythro-1-(imidazol-4-yl)glycerol 3-phosphate + 5-amino-1-(5-phospho-beta-D-ribosyl)imidazole-4-carboxamide + L-glutamate + H(+). Its pathway is amino-acid biosynthesis; L-histidine biosynthesis; L-histidine from 5-phospho-alpha-D-ribose 1-diphosphate: step 5/9. In terms of biological role, IGPS catalyzes the conversion of PRFAR and glutamine to IGP, AICAR and glutamate. The HisF subunit catalyzes the cyclization activity that produces IGP and AICAR from PRFAR using the ammonia provided by the HisH subunit. The protein is Imidazole glycerol phosphate synthase subunit HisF of Escherichia fergusonii (strain ATCC 35469 / DSM 13698 / CCUG 18766 / IAM 14443 / JCM 21226 / LMG 7866 / NBRC 102419 / NCTC 12128 / CDC 0568-73).